The following is a 231-amino-acid chain: Large ribosomal subunit protein uL1 (231 aa).

Belongs to the universal ribosomal protein uL1 family. As to quaternary structure, part of the 50S ribosomal subunit.

In terms of biological role, binds directly to 23S rRNA. The L1 stalk is quite mobile in the ribosome, and is involved in E site tRNA release. Protein L1 is also a translational repressor protein, it controls the translation of the L11 operon by binding to its mRNA. The sequence is that of Large ribosomal subunit protein uL1 from Methylococcus capsulatus (strain ATCC 33009 / NCIMB 11132 / Bath).